We begin with the raw amino-acid sequence, 72 residues long: Translation initiation factor IF-1 (72 aa).

The S1-like domain occupies methionine 1–arginine 72.

It belongs to the IF-1 family. In terms of assembly, component of the 30S ribosomal translation pre-initiation complex which assembles on the 30S ribosome in the order IF-2 and IF-3, IF-1 and N-formylmethionyl-tRNA(fMet); mRNA recruitment can occur at any time during PIC assembly.

It is found in the cytoplasm. In terms of biological role, one of the essential components for the initiation of protein synthesis. Stabilizes the binding of IF-2 and IF-3 on the 30S subunit to which N-formylmethionyl-tRNA(fMet) subsequently binds. Helps modulate mRNA selection, yielding the 30S pre-initiation complex (PIC). Upon addition of the 50S ribosomal subunit IF-1, IF-2 and IF-3 are released leaving the mature 70S translation initiation complex. The polypeptide is Translation initiation factor IF-1 (Shewanella amazonensis (strain ATCC BAA-1098 / SB2B)).